A 463-amino-acid polypeptide reads, in one-letter code: Elongation factor 1-alpha 2 (463 aa).

G2 is subject to N,N,N-trimethylglycine. Residues 5–242 enclose the tr-type G domain; it reads KTHINIVVIG…DTILPPTRPT (238 aa). Residues 14 to 21 form a G1 region; sequence GHVDSGKS. The GTP site is built by D17, S18, G19, K20, S21, and T22. A Mg(2+)-binding site is contributed by D17. K36 bears the N6,N6,N6-trimethyllysine; alternate mark. K36 carries the N6,N6-dimethyllysine; alternate modification. K36 is subject to N6-methyllysine; alternate. K55 bears the N6,N6,N6-trimethyllysine mark. The residue at position 55 (K55) is an N6,N6-dimethyllysine. The G2 stretch occupies residues 70 to 74; sequence GITID. K79 is modified (N6,N6,N6-trimethyllysine). The interval 91 to 94 is G3; that stretch reads DAPG. Positions 153, 154, and 156 each coordinate GTP. Residues 153–156 form a G4 region; that stretch reads NKMD. S163 bears the Phosphoserine mark. N6,N6-dimethyllysine; alternate is present on K165. K165 is modified (N6-methyllysine; alternate). K165 bears the N6,N6,N6-trimethyllysine; alternate; by EEF1AKMT3 mark. K179 is modified (N6-acetyllysine). Residues S194, G195, and W196 each coordinate GTP. A G5 region spans residues 194–196; the sequence is SGW. S224 bears the Phosphoserine mark. T239 carries the post-translational modification Phosphothreonine. Residues E301 and E374 each carry the 5-glutamyl glycerylphosphorylethanolamine modification. The residue at position 439 (K439) is an N6-acetyllysine. Positions 444 to 463 are disordered; sequence KSGGAGKVTKSAQKAQKAGK.

Belongs to the TRAFAC class translation factor GTPase superfamily. Classic translation factor GTPase family. EF-Tu/EF-1A subfamily. Homodimer; arranged in a 'head to tail' dimer configuration. Trimethylated at Lys-165 by EEF1AKMT3. Mono-, di-, and trimethylated at Lys-36 by EEF1AKMT4; trimethylated form is predominant. Methylation by EEF1AKMT4 contributes to the fine-tuning of translation rates for a subset of tRNAs. Trimethylated at the N-terminus and dimethylated at Lys-55 by METTL13.

The protein localises to the endoplasmic reticulum membrane. It catalyses the reaction GTP + H2O = GDP + phosphate + H(+). Functionally, translation elongation factor that catalyzes the GTP-dependent binding of aminoacyl-tRNA (aa-tRNA) to the A-site of ribosomes during the elongation phase of protein synthesis. Base pairing between the mRNA codon and the aa-tRNA anticodon promotes GTP hydrolysis, releasing the aa-tRNA from EEF1A1 and allowing its accommodation into the ribosome. The growing protein chain is subsequently transferred from the P-site peptidyl tRNA to the A-site aa-tRNA, extending it by one amino acid through ribosome-catalyzed peptide bond formation. The polypeptide is Elongation factor 1-alpha 2 (Eef1a2) (Rattus norvegicus (Rat)).